The chain runs to 296 residues: Heme oxygenase 1 (296 aa).

Residues 1-273 lie on the Cytoplasmic side of the membrane; that stretch reads METSQPHNAE…RMQADMLTTS (273 aa). Heme b-binding residues include lysine 21, histidine 28, tyrosine 137, and arginine 186. Residues 231–264 are disordered; that stretch reads GHAVQPKAELRTRSVNKSHENSPAAGKESERTSR. Residues 238 to 250 are compositionally biased toward basic and acidic residues; that stretch reads AELRTRSVNKSHE. The chain crosses the membrane as a helical; Anchor for type IV membrane protein span at residues 274–296; it reads PLVRWLLALGFIATTVAVGLFAM.

It belongs to the heme oxygenase family. As to quaternary structure, homodimer and higher order homooligomer. Oligomerization is crucial for its stability and function in the endoplasmic reticulum. Post-translationally, a soluble form arises by proteolytic removal of the membrane anchor.

The protein resides in the endoplasmic reticulum membrane. The enzyme catalyses heme b + 3 reduced [NADPH--hemoprotein reductase] + 3 O2 = biliverdin IXalpha + CO + Fe(2+) + 3 oxidized [NADPH--hemoprotein reductase] + 3 H2O + H(+). Inhibited by metalloporphyrins in the following order of decreasing potency: tin mesoporphyrin &gt; tin protoporphyrin &gt; zinc protoporphyrin &gt; manganese protoporphyrin &gt; cobalt protoporphyrin. In terms of biological role, catalyzes the oxidative cleavage of heme at the alpha-methene bridge carbon, released as carbon monoxide (CO), to generate biliverdin IXalpha, while releasing the central heme iron chelate as ferrous iron. Affords protection against programmed cell death and this cytoprotective effect relies on its ability to catabolize free heme and prevent it from sensitizing cells to undergo apoptosis. Catalyzes the oxidative cleavage of heme at the alpha-methene bridge carbon, released as carbon monoxide (CO), to generate biliverdin IXalpha, while releasing the central heme iron chelate as ferrous iron. This chain is Heme oxygenase 1 (HMOX1), found in Gallus gallus (Chicken).